A 245-amino-acid polypeptide reads, in one-letter code: Probable transcriptional regulatory protein NSE_0641 (245 aa).

Positions 1-22 (MAGHSQYANIKHRKNAQDAKRA) are disordered.

It belongs to the TACO1 family.

The protein resides in the cytoplasm. The protein is Probable transcriptional regulatory protein NSE_0641 of Neorickettsia sennetsu (strain ATCC VR-367 / Miyayama) (Ehrlichia sennetsu).